The primary structure comprises 193 residues: Cerebellin-1 (193 aa).

Residues 1–21 form the signal peptide; it reads MLGVVELLLLGAAWLAGPARG. N-linked (GlcNAc...) asparagine glycosylation is present at asparagine 23. The tract at residues 34–38 is essential for interaction with NRXN1 and linker of two C1q trimers into disulfide-linked hexamers; it reads CLVVC. A C1q domain is found at 57–193; sequence SGSAKVAFSA…TFSGFLVFPL (137 aa). The interval 62–193 is necessary for interaction with CBLN3, and homotrimerization; sequence VAFSAIRSTN…TFSGFLVFPL (132 aa). The N-linked (GlcNAc...) asparagine glycan is linked to asparagine 79. Residues 122–147 are essential for interaction with GRID2; sequence YNRQTIQVSLMLNGWPVISAFAGDQD.

In terms of assembly, homohexamer; disulfide-linked homotrimers. The trimers are assembled via the globular C1q domains. The trimers associate via N-terminal cysteine residues to form disulfide-linked hexamers. May form oligomers with CBLN2, CBLN3 and CBLN4 prior to secretion. Once secreted, does not interact with other CBLN family members. Interacts with GRID1. Interacts with NRXN1 and NRXN2 long (alpha) and short (beta) isoforms produced by alternative promoter usage. Competes with NLGN1 for NRXN1-binding. Weakly interacts with NRXN3 short isoform and not at all with NRXN3 long isoform. Interacts (via C1q domain) with GRID2; GRID2-binding is calcium-independent; CBLN1 hexamers anchor GRID2 N-terminal domain dimers to monomeric NRXN1 isoform beta; promotes synaptogenesis and mediates the D-Serine-dependent long term depression signals and AMPA receptor endocytosis. The proteolytic processing to yield cerebellin seems to occur either prior to the secretion by presynaptic neurons and subsequent oligomerization or in some other location after release of the mature protein. Post-translationally, sialoglycoprotein.

Its subcellular location is the secreted. The protein resides in the postsynaptic cell membrane. Its function is as follows. Required for synapse integrity and synaptic plasticity. During cerebellar synapse formation, essential for the matching and maintenance of pre- and post-synaptic elements at parallel fiber-Purkinje cell synapses, the establishment of the proper pattern of climbing fiber-Purkinje cell innervation, and induction of long-term depression at parallel fiber-Purkinje cell synapses. Plays a role as a synaptic organizer that acts bidirectionally on both pre- and post-synaptic components. On the one hand induces accumulation of synaptic vesicles in the pre-synaptic part by binding with NRXN1 and in other hand induces clustering of GRID2 and its associated proteins at the post-synaptic site through association of GRID2. NRXN1-CBLN1-GRID2 complex directly induces parallel fiber protrusions that encapsulate spines of Purkinje cells leading to accumulation of GRID2 and synaptic vesicles. Required for CBLN3 export from the endoplasmic reticulum and secretion. NRXN1-CBLN1-GRID2 complex mediates the D-Serine-dependent long term depression signals and AMPA receptor endocytosis. Essential for long-term maintenance but not establishment of excitatory synapses. Inhibits the formation and function of inhibitory GABAergic synapses in cerebellar Purkinje cells. Functionally, the cerebellin peptide exerts neuromodulatory functions. Directly stimulates norepinephrine release via the adenylate cyclase/PKA-dependent signaling pathway; and indirectly enhances adrenocortical secretion in vivo, through a paracrine mechanism involving medullary catecholamine release. This Bos taurus (Bovine) protein is Cerebellin-1.